The primary structure comprises 230 residues: uncharacterized protein (230 aa).

Active-site charge relay system residues include Ser-124 and His-158.

Belongs to the peptidase S51 family.

This is an uncharacterized protein from Bacillus subtilis (strain 168).